The sequence spans 71 residues: UPF0346 protein SAK_1533 (71 aa).

It belongs to the UPF0346 family.

In Streptococcus agalactiae serotype Ia (strain ATCC 27591 / A909 / CDC SS700), this protein is UPF0346 protein SAK_1533.